A 679-amino-acid polypeptide reads, in one-letter code: Methionine--tRNA ligase (679 aa).

Positions 12 to 22 (PYANGAIHLGH) match the 'HIGH' region motif. Zn(2+) is bound by residues Cys143, Cys146, Cys156, and Cys159. Residues 328-332 (KMSKS) carry the 'KMSKS' region motif. Residue Lys331 coordinates ATP. The 103-residue stretch at 577–679 (DFAKLDLRVA…EGIRPGMQVK (103 aa)) folds into the tRNA-binding domain.

The protein belongs to the class-I aminoacyl-tRNA synthetase family. MetG type 1 subfamily. As to quaternary structure, homodimer. Zn(2+) is required as a cofactor.

It is found in the cytoplasm. The enzyme catalyses tRNA(Met) + L-methionine + ATP = L-methionyl-tRNA(Met) + AMP + diphosphate. Its function is as follows. Is required not only for elongation of protein synthesis but also for the initiation of all mRNA translation through initiator tRNA(fMet) aminoacylation. This is Methionine--tRNA ligase from Actinobacillus pleuropneumoniae serotype 5b (strain L20).